A 135-amino-acid polypeptide reads, in one-letter code: Hydroxylaminobenzene mutase HabA (135 aa).

A run of 4 helical transmembrane segments spans residues 5-25 (LFAS…LVPV), 33-55 (VAGH…LWPY), 67-87 (FWLL…AALW), and 113-133 (FLLF…LIGI).

Its subcellular location is the cell membrane. It carries out the reaction N-phenylhydroxylamine = 2-aminophenol. Catalyzes the rearrangement of hydroxylaminobenzene to 2-aminophenol. Involved in the degradation of nitrobenzene. In Ectopseudomonas oleovorans (Pseudomonas oleovorans), this protein is Hydroxylaminobenzene mutase HabA (habA).